The following is an 807-amino-acid chain: Glycerol-3-phosphate acyltransferase (807 aa).

An HXXXXD motif motif is present at residues Cys-305 to Met-310.

It belongs to the GPAT/DAPAT family.

It is found in the cell inner membrane. The enzyme catalyses sn-glycerol 3-phosphate + an acyl-CoA = a 1-acyl-sn-glycero-3-phosphate + CoA. The protein operates within phospholipid metabolism; CDP-diacylglycerol biosynthesis; CDP-diacylglycerol from sn-glycerol 3-phosphate: step 1/3. This Shigella boydii serotype 18 (strain CDC 3083-94 / BS512) protein is Glycerol-3-phosphate acyltransferase.